Reading from the N-terminus, the 755-residue chain is Kojibiose phosphorylase (755 aa).

333 to 334 (WD) serves as a coordination point for substrate. The active-site Proton donor is E473. Substrate is bound at residue 573–574 (KQ).

Belongs to the glycosyl hydrolase 65 family.

It catalyses the reaction kojibiose + phosphate = beta-D-glucose 1-phosphate + D-glucose. In vitro catalyzes the phosphorolysis of D-kojibiose into beta-D-glucose 1-phosphate and D-glucose. No other disaccharides tested substitute for D-kojibiose. In the reverse direction disaccharides can be formed from beta-D-glucose 1-phosphate plus D-glucose, L-sorbose, D-sorbitol, L-iditol or 1,5-anhydro-D-glucitol, but with low efficiency. The beta-D-glucose 1-phosphate product is the substrate for YcjU (AC P77366), the next apparent enzyme in the putative biochemical pathway encoded in this locus (yjcM to ycjW). In Escherichia coli (strain K12), this protein is Kojibiose phosphorylase (ycjT).